A 122-amino-acid chain; its full sequence is AGEVEKREGMMKQIGGAMGSLAAISKGEKPFDADTVKAAVTTIGTNAKAFPEQFPAGTETGSAAAPAIWENFEDFKAKAAKLGTDADIVLANLPGDQAGVATAMKTLGADCGTCHQTYRLKK.

Residues methionine 11, cysteine 111, cysteine 114, and histidine 115 each contribute to the heme site. Heme c-binding residues include methionine 11, cysteine 111, cysteine 114, and histidine 115.

Monomer. In terms of processing, binds 1 heme c group covalently per subunit.

Functionally, low-spin monoheme cytochrome c. The polypeptide is Cytochrome c-556 (Agrobacterium tumefaciens (strain B2A)).